The primary structure comprises 434 residues: F-box/LRR-repeat protein 21 (434 aa).

The F-box domain maps to 39–85; the sequence is RLDWGSLPHRVVLCVFQYLPLIDRARASSVCRRWNEVFHIPDLWRKF. 7 LRR repeats span residues 140-165, 187-213, 214-239, 242-265, 322-347, 349-374, and 375-400; these read LVNCSTQTLGLISTAKPSFMTMSKSH, DTPVDDPSLSILVANNSDTLRRLKMSS, CPHVSSDGILCVADHCQGLRELALNY, LSDELLLALSNETHVNLEHLRIDV, GRSVSKGILGRLSLNCPRLVELVVCA, GIQVIDNELICIAEHCKNLTALGLSE, and CEVSCTAFIEFVRLCGRKLTHLSIME.

Part of the SCF (SKP1-CUL1-F-box) E3 ubiquitin-protein ligase complex SCF(FBXL21) composed of CUL1, SKP1, RBX1 and FBXL21. Interacts with CRY2. Interacts with CRY1. As to expression, expressed in the adenohypophysis, hypothalamus (especially in the suprachiasmatic nucleus or nuclei, SCN) and pineal, all neuroendocrine structures associated with timing and homeostasis.

The protein resides in the cytoplasm. The protein localises to the cytosol. It localises to the nucleus. It participates in protein modification; protein ubiquitination. Its function is as follows. Substrate-recognition component of the SCF(FBXL21) E3 ubiquitin ligase complex involved in circadian rhythm function. Plays a key role in the maintenance of both the speed and the robustness of the circadian clock oscillation. The SCF(FBXL21) complex mainly acts in the cytosol and mediates ubiquitination of CRY proteins (CRY1 and CRY2), leading to CRY proteins stabilization. The SCF(FBXL21) complex counteracts the activity of the SCF(FBXL3) complex and protects CRY proteins from degradation. Involved in the hypothalamic suprachiasmatic nucleus (SCN) clock regulating temporal organization of the daily activities. The protein is F-box/LRR-repeat protein 21 (Fbxl21) of Ovis aries (Sheep).